The sequence spans 277 residues: Myelin proteolipid protein (277 aa).

The Cytoplasmic portion of the chain corresponds to 2 to 9 (GLLECCAR). 3 S-palmitoyl cysteine lipidation sites follow: Cys-6, Cys-7, and Cys-10. The chain crosses the membrane as a helical span at residues 10 to 36 (CLVGAPFASLVATGLCFFGVALFCGCG). At 37–63 (HEALTGTEKLIETYFSKNYQDYEYLIN) the chain is on the extracellular side. The helical transmembrane segment at 64–88 (VIHAFQYVIYGTASFFFLYGALLLA) threads the bilayer. The Cytoplasmic portion of the chain corresponds to 89–151 (EGFYTTGAVR…LGKWLGHPDK (63 aa)). Residue Cys-109 is the site of S-palmitoyl cysteine attachment. At Ser-114 the chain carries Phosphoserine. A phosphothreonine mark is found at Thr-116 and Thr-118. 2 S-palmitoyl cysteine lipidation sites follow: Cys-139 and Cys-141. The helical transmembrane segment at 152–177 (FVGITYALTVVWLLVFACSAVPVYIY) threads the bilayer. The Extracellular segment spans residues 178-233 (FNTWTTCQSIAFPSKTSASIGSLCADARMYGVLPWNAFPGKVCGSNLLSICKTAEF). 2 disulfides stabilise this stretch: Cys-184-Cys-228 and Cys-201-Cys-220. Ser-199 carries the O-palmitoyl serine lipid modification. The chain crosses the membrane as a helical span at residues 234-260 (QMTFHLFIAAFVGAAATLVSLLTFMIA). Residues 261-277 (ATYNFAVLKLMGRGTKF) lie on the Cytoplasmic side of the membrane.

Belongs to the myelin proteolipid protein family. As to quaternary structure, interacts with MAL.

It localises to the cell membrane. The protein resides in the myelin membrane. This is the major myelin protein from the central nervous system. It plays an important role in the formation or maintenance of the multilamellar structure of myelin. The chain is Myelin proteolipid protein (Plp1) from Mus musculus (Mouse).